The primary structure comprises 138 residues: ATP synthase epsilon chain (138 aa).

This sequence belongs to the ATPase epsilon chain family. In terms of assembly, F-type ATPases have 2 components, CF(1) - the catalytic core - and CF(0) - the membrane proton channel. CF(1) has five subunits: alpha(3), beta(3), gamma(1), delta(1), epsilon(1). CF(0) has three main subunits: a, b and c.

The protein resides in the cell inner membrane. Its function is as follows. Produces ATP from ADP in the presence of a proton gradient across the membrane. In Cupriavidus metallidurans (strain ATCC 43123 / DSM 2839 / NBRC 102507 / CH34) (Ralstonia metallidurans), this protein is ATP synthase epsilon chain.